The sequence spans 122 residues: Large ribosomal subunit protein bL12 (122 aa).

Belongs to the bacterial ribosomal protein bL12 family. Homodimer. Part of the ribosomal stalk of the 50S ribosomal subunit. Forms a multimeric L10(L12)X complex, where L10 forms an elongated spine to which 2 to 4 L12 dimers bind in a sequential fashion. Binds GTP-bound translation factors.

Functionally, forms part of the ribosomal stalk which helps the ribosome interact with GTP-bound translation factors. Is thus essential for accurate translation. This Buchnera aphidicola subsp. Schizaphis graminum (strain Sg) protein is Large ribosomal subunit protein bL12.